A 385-amino-acid polypeptide reads, in one-letter code: Cell division protein FtsZ (385 aa).

Residues 20 to 24 (GGGGN), 107 to 109 (GTG), glutamate 138, arginine 142, and asparagine 186 each bind GTP.

Belongs to the FtsZ family. In terms of assembly, homodimer. Polymerizes to form a dynamic ring structure in a strictly GTP-dependent manner. Interacts directly with several other division proteins.

The protein localises to the cytoplasm. Its function is as follows. Essential cell division protein that forms a contractile ring structure (Z ring) at the future cell division site. The regulation of the ring assembly controls the timing and the location of cell division. One of the functions of the FtsZ ring is to recruit other cell division proteins to the septum to produce a new cell wall between the dividing cells. Binds GTP and shows GTPase activity. The sequence is that of Cell division protein FtsZ from Buchnera aphidicola subsp. Baizongia pistaciae (strain Bp).